The following is a 257-amino-acid chain: tRNA-cytidine(32) 2-sulfurtransferase (257 aa).

The short motif at 37–42 (SGGKDS) is the PP-loop motif element. The [4Fe-4S] cluster site is built by C112, C115, and C202.

Belongs to the TtcA family. As to quaternary structure, homodimer. Mg(2+) serves as cofactor. [4Fe-4S] cluster is required as a cofactor.

It is found in the cytoplasm. The catalysed reaction is cytidine(32) in tRNA + S-sulfanyl-L-cysteinyl-[cysteine desulfurase] + AH2 + ATP = 2-thiocytidine(32) in tRNA + L-cysteinyl-[cysteine desulfurase] + A + AMP + diphosphate + H(+). It participates in tRNA modification. In terms of biological role, catalyzes the ATP-dependent 2-thiolation of cytidine in position 32 of tRNA, to form 2-thiocytidine (s(2)C32). The sulfur atoms are provided by the cysteine/cysteine desulfurase (IscS) system. The polypeptide is tRNA-cytidine(32) 2-sulfurtransferase (Geobacter metallireducens (strain ATCC 53774 / DSM 7210 / GS-15)).